The primary structure comprises 97 residues: Signal recognition particle 19 kDa protein (97 aa).

The protein belongs to the SRP19 family. Part of the signal recognition particle protein translocation system, which is composed of SRP and FtsY. Archaeal SRP consists of a 7S RNA molecule of 300 nucleotides and two protein subunits: SRP54 and SRP19.

It is found in the cytoplasm. In terms of biological role, involved in targeting and insertion of nascent membrane proteins into the cytoplasmic membrane. Binds directly to 7S RNA and mediates binding of the 54 kDa subunit of the SRP. This chain is Signal recognition particle 19 kDa protein, found in Pyrobaculum calidifontis (strain DSM 21063 / JCM 11548 / VA1).